A 127-amino-acid chain; its full sequence is Small ribosomal subunit protein uS12 (127 aa).

3-methylthioaspartic acid is present on aspartate 89.

This sequence belongs to the universal ribosomal protein uS12 family. Part of the 30S ribosomal subunit. Contacts proteins S8 and S17. May interact with IF1 in the 30S initiation complex.

Functionally, with S4 and S5 plays an important role in translational accuracy. Its function is as follows. Interacts with and stabilizes bases of the 16S rRNA that are involved in tRNA selection in the A site and with the mRNA backbone. Located at the interface of the 30S and 50S subunits, it traverses the body of the 30S subunit contacting proteins on the other side and probably holding the rRNA structure together. The combined cluster of proteins S8, S12 and S17 appears to hold together the shoulder and platform of the 30S subunit. The protein is Small ribosomal subunit protein uS12 of Aliarcobacter butzleri (strain RM4018) (Arcobacter butzleri).